We begin with the raw amino-acid sequence, 751 residues long: Nucleoporin NUP37 (751 aa).

A WD 1 repeat occupies 21–65 (SLGRRIYDVKTYPVQSPQGATILIYGHENGATVVWRGGRRLKPPK). A disordered region spans residues 57–77 (GGRRLKPPKPQTNEKRNGTKP). Positions 68–77 (TNEKRNGTKP) are enriched in basic and acidic residues. WD repeat units follow at residues 162 to 209 (TNDV…LTGP), 237 to 271 (AQAA…KPGT), 282 to 322 (YLPS…LPSD), and 351 to 390 (TSRK…PTAA). The segment at 419 to 443 (EGTSPLRNPTTQKASSSSSGEFVPM) is disordered. The span at 423 to 438 (PLRNPTTQKASSSSSG) shows a compositional bias: polar residues. WD repeat units follow at residues 455-492 (AFGG…VLFL) and 494-534 (GADP…RMIR). Residues 671 to 692 (IPSTDAGDEETIPATSAPSSQQ) are disordered. Residues 683-692 (PATSAPSSQQ) show a composition bias toward polar residues. The stretch at 716–750 (RDVEQELLDIMEIDRELEQLEQARERGRKRVFFEE) forms a coiled coil.

In terms of assembly, the nuclear pore complex (NPC) constitutes the exclusive means of nucleocytoplasmic transport. NPCs allow the passive diffusion of ions and small molecules and the active, nuclear transport receptor-mediated bidirectional transport of macromolecules such as proteins, RNAs, ribonucleoparticles (RNPs), and ribosomal subunits across the nuclear envelope. The 55-60 MDa NPC is composed of at least 28 different subunits: AMO1, ELYS, GLE1, GLE2, MLP1, NDC1, NIC96, NSP1, NUP133, NUP145, NUP152, NUP159, NUP170, NUP188, NUP192, NUP37, NUP49, NUP53, NUP56, NUP57, NUP82, NUP84, NUP85, POM152, POM33, POM34, SEC13 and SEH1. Due to its 8-fold rotational symmetry, all subunits are present with 8 copies or multiples thereof.

The protein localises to the nucleus. It is found in the nuclear pore complex. In Chaetomium thermophilum (strain DSM 1495 / CBS 144.50 / IMI 039719) (Thermochaetoides thermophila), this protein is Nucleoporin NUP37 (NUP37).